The primary structure comprises 108 residues: UPF0060 membrane protein SA2130 (108 aa).

The next 4 membrane-spanning stretches (helical) occupy residues 5-25, 31-51, 60-80, and 86-106; these read IFIF…IWLW, SSLV…IATF, VYAA…MVVD, and KYDV…LLPS.

It belongs to the UPF0060 family.

It is found in the cell membrane. The chain is UPF0060 membrane protein SA2130 from Staphylococcus aureus (strain N315).